Consider the following 185-residue polypeptide: Ribosome-recycling factor (185 aa).

It belongs to the RRF family.

The protein localises to the cytoplasm. Functionally, responsible for the release of ribosomes from messenger RNA at the termination of protein biosynthesis. May increase the efficiency of translation by recycling ribosomes from one round of translation to another. In Pseudomonas fluorescens (strain Pf0-1), this protein is Ribosome-recycling factor.